The following is a 145-amino-acid chain: D-aminoacyl-tRNA deacylase (145 aa).

The Gly-cisPro motif, important for rejection of L-amino acids signature appears at 137 to 138 (GP).

Belongs to the DTD family. Homodimer.

The protein resides in the cytoplasm. The catalysed reaction is glycyl-tRNA(Ala) + H2O = tRNA(Ala) + glycine + H(+). It catalyses the reaction a D-aminoacyl-tRNA + H2O = a tRNA + a D-alpha-amino acid + H(+). Functionally, an aminoacyl-tRNA editing enzyme that deacylates mischarged D-aminoacyl-tRNAs. Also deacylates mischarged glycyl-tRNA(Ala), protecting cells against glycine mischarging by AlaRS. Acts via tRNA-based rather than protein-based catalysis; rejects L-amino acids rather than detecting D-amino acids in the active site. By recycling D-aminoacyl-tRNA to D-amino acids and free tRNA molecules, this enzyme counteracts the toxicity associated with the formation of D-aminoacyl-tRNA entities in vivo and helps enforce protein L-homochirality. This Cereibacter sphaeroides (strain ATCC 17029 / ATH 2.4.9) (Rhodobacter sphaeroides) protein is D-aminoacyl-tRNA deacylase.